Reading from the N-terminus, the 504-residue chain is ATP synthase subunit alpha (504 aa).

ATP is bound at residue Gly-172–Thr-179.

It belongs to the ATPase alpha/beta chains family. As to quaternary structure, F-type ATPases have 2 components, CF(1) - the catalytic core - and CF(0) - the membrane proton channel. CF(1) has five subunits: alpha(3), beta(3), gamma(1), delta(1), epsilon(1). CF(0) has three main subunits: a(1), b(2) and c(9-12). The alpha and beta chains form an alternating ring which encloses part of the gamma chain. CF(1) is attached to CF(0) by a central stalk formed by the gamma and epsilon chains, while a peripheral stalk is formed by the delta and b chains.

It localises to the cell inner membrane. It carries out the reaction ATP + H2O + 4 H(+)(in) = ADP + phosphate + 5 H(+)(out). Its function is as follows. Produces ATP from ADP in the presence of a proton gradient across the membrane. The alpha chain is a regulatory subunit. This is ATP synthase subunit alpha from Petrotoga mobilis (strain DSM 10674 / SJ95).